A 270-amino-acid chain; its full sequence is Putative hydro-lyase Reut_A2449 (270 aa).

Belongs to the D-glutamate cyclase family.

This Cupriavidus pinatubonensis (strain JMP 134 / LMG 1197) (Cupriavidus necator (strain JMP 134)) protein is Putative hydro-lyase Reut_A2449.